The sequence spans 591 residues: Aspartate--tRNA(Asp/Asn) ligase (591 aa).

Glutamate 176 is a binding site for L-aspartate. Residues 200–203 (QLFK) are aspartate. Arginine 222 lines the L-aspartate pocket. Residues 222-224 (RDE) and glutamine 231 each bind ATP. Histidine 450 serves as a coordination point for L-aspartate. Residue glutamate 484 participates in ATP binding. Arginine 491 is an L-aspartate binding site. 536 to 539 (GLDR) serves as a coordination point for ATP.

It belongs to the class-II aminoacyl-tRNA synthetase family. Type 1 subfamily. As to quaternary structure, homodimer.

The protein localises to the cytoplasm. The catalysed reaction is tRNA(Asx) + L-aspartate + ATP = L-aspartyl-tRNA(Asx) + AMP + diphosphate. Aspartyl-tRNA synthetase with relaxed tRNA specificity since it is able to aspartylate not only its cognate tRNA(Asp) but also tRNA(Asn). Reaction proceeds in two steps: L-aspartate is first activated by ATP to form Asp-AMP and then transferred to the acceptor end of tRNA(Asp/Asn). In Bacillus anthracis (strain CDC 684 / NRRL 3495), this protein is Aspartate--tRNA(Asp/Asn) ligase.